The sequence spans 1263 residues: DNA topoisomerase 2 (1263 aa).

Residues asparagine 80, asparagine 109, 137–139 (STN), and 150–157 (GKNGFGAK) each bind ATP. The tract at residues 329–331 (VKK) is interaction with DNA. ATP is bound at residue 362 to 364 (QTK). The 115-residue stretch at 439-553 (CTLILTEGDS…SLVKYEGFIQ (115 aa)) folds into the Toprim domain. Mg(2+)-binding residues include glutamate 445, aspartate 522, and aspartate 524. Residues 737–1223 (VPNLMDGFKP…SPEEIWEEEL (487 aa)) enclose the Topo IIA-type catalytic domain. Residue tyrosine 828 is the O-(5'-phospho-DNA)-tyrosine intermediate of the active site. Positions 977–1015 (KKASKAVSSAKNTKTTTKAGSKTGSRTRKNPALAKKSQK) are disordered. Residues 981–1000 (KAVSSAKNTKTTTKAGSKTG) show a composition bias toward low complexity. Residues 1068 to 1077 (KLVKPLNLTN) are interaction with DNA. The segment at 1244–1263 (LLNKKKGSTGKKSRKTSTQK) is disordered. Residues 1247-1263 (KKKGSTGKKSRKTSTQK) show a composition bias toward basic residues.

The protein belongs to the type II topoisomerase family. Mg(2+) is required as a cofactor. Requires Mn(2+) as cofactor. The cofactor is Ca(2+).

It carries out the reaction ATP-dependent breakage, passage and rejoining of double-stranded DNA.. Can introduce negative superhelical turns into double-stranded circular DNA. This chain is DNA topoisomerase 2 (TOP2), found in Acanthamoeba polyphaga (Amoeba).